The sequence spans 492 residues: Trypanothione reductase (492 aa).

36 to 52 (DVQMVHGPPFFSALGGT) provides a ligand contact to FAD. Cysteines 53 and 58 form a disulfide. The Proton acceptor role is filled by H461.

It belongs to the class-I pyridine nucleotide-disulfide oxidoreductase family. Homodimer. Requires FAD as cofactor.

It localises to the cytoplasm. It catalyses the reaction trypanothione + NADP(+) = trypanothione disulfide + NADPH + H(+). Functionally, trypanothione is the parasite analog of glutathione; this enzyme is the equivalent of glutathione reductase. This Trypanosoma cruzi protein is Trypanothione reductase (TPR).